We begin with the raw amino-acid sequence, 629 residues long: Phosphomethylpyrimidine synthase (629 aa).

Substrate-binding positions include Asn-215, Met-244, Tyr-273, His-309, 329-331 (SRG), 370-373 (DGLR), and Glu-409. His-413 serves as a coordination point for Zn(2+). Substrate is bound at residue Tyr-436. His-477 serves as a coordination point for Zn(2+). The [4Fe-4S] cluster site is built by Cys-557, Cys-560, and Cys-565. The disordered stretch occupies residues 589 to 610 (ENIKRETSAEEAEEAREGMSDM).

The protein belongs to the ThiC family. As to quaternary structure, homodimer. [4Fe-4S] cluster is required as a cofactor.

It catalyses the reaction 5-amino-1-(5-phospho-beta-D-ribosyl)imidazole + S-adenosyl-L-methionine = 4-amino-2-methyl-5-(phosphooxymethyl)pyrimidine + CO + 5'-deoxyadenosine + formate + L-methionine + 3 H(+). It participates in cofactor biosynthesis; thiamine diphosphate biosynthesis. Functionally, catalyzes the synthesis of the hydroxymethylpyrimidine phosphate (HMP-P) moiety of thiamine from aminoimidazole ribotide (AIR) in a radical S-adenosyl-L-methionine (SAM)-dependent reaction. This Erythrobacter litoralis (strain HTCC2594) protein is Phosphomethylpyrimidine synthase.